The following is a 102-amino-acid chain: Large ribosomal subunit protein bL21 (102 aa).

Belongs to the bacterial ribosomal protein bL21 family. Part of the 50S ribosomal subunit. Contacts protein L20.

Its function is as follows. This protein binds to 23S rRNA in the presence of protein L20. The polypeptide is Large ribosomal subunit protein bL21 (Bacillus velezensis (strain DSM 23117 / BGSC 10A6 / LMG 26770 / FZB42) (Bacillus amyloliquefaciens subsp. plantarum)).